The primary structure comprises 409 residues: Na(+)/H(+) antiporter NhaA 2 (409 aa).

The next 12 helical transmembrane spans lie at 10-30 (VAAG…NTPA), 60-80 (GLLV…FLAG), 89-109 (LVPA…YLAI), 118-138 (GWPV…AVFG), 148-168 (FLLA…AVFF), 171-191 (GLDL…AVVG), 203-223 (IAVV…TLSS), 224-244 (GIHA…LSGL), 257-277 (IVLP…IGLA), 283-303 (FWGI…AGGL), 328-348 (LLGG…FAGL), and 356-376 (TLAV…TLSI). Residues 384-409 (AGAAADDDDATRDDFPAHADGGPARA) are disordered.

The protein belongs to the NhaA Na(+)/H(+) (TC 2.A.33) antiporter family.

Its subcellular location is the cell membrane. The catalysed reaction is Na(+)(in) + 2 H(+)(out) = Na(+)(out) + 2 H(+)(in). Functionally, na(+)/H(+) antiporter that extrudes sodium in exchange for external protons. The polypeptide is Na(+)/H(+) antiporter NhaA 2 (Clavibacter michiganensis subsp. michiganensis (strain NCPPB 382)).